Here is a 261-residue protein sequence, read N- to C-terminus: Imidazole glycerol phosphate synthase subunit HisF (261 aa).

Catalysis depends on residues aspartate 16 and aspartate 135.

It belongs to the HisA/HisF family. As to quaternary structure, heterodimer of HisH and HisF.

The protein localises to the cytoplasm. It carries out the reaction 5-[(5-phospho-1-deoxy-D-ribulos-1-ylimino)methylamino]-1-(5-phospho-beta-D-ribosyl)imidazole-4-carboxamide + L-glutamine = D-erythro-1-(imidazol-4-yl)glycerol 3-phosphate + 5-amino-1-(5-phospho-beta-D-ribosyl)imidazole-4-carboxamide + L-glutamate + H(+). Its pathway is amino-acid biosynthesis; L-histidine biosynthesis; L-histidine from 5-phospho-alpha-D-ribose 1-diphosphate: step 5/9. IGPS catalyzes the conversion of PRFAR and glutamine to IGP, AICAR and glutamate. The HisF subunit catalyzes the cyclization activity that produces IGP and AICAR from PRFAR using the ammonia provided by the HisH subunit. In Mycolicibacterium smegmatis (strain ATCC 700084 / mc(2)155) (Mycobacterium smegmatis), this protein is Imidazole glycerol phosphate synthase subunit HisF.